Consider the following 98-residue polypeptide: Integration host factor subunit alpha (98 aa).

Residues 51-71 form a disordered region; sequence NFDLRDKNERPGRNPKTGEDI. A compositionally biased stretch (basic and acidic residues) spans 53-69; it reads DLRDKNERPGRNPKTGE.

This sequence belongs to the bacterial histone-like protein family. As to quaternary structure, heterodimer of an alpha and a beta chain.

Its function is as follows. This protein is one of the two subunits of integration host factor, a specific DNA-binding protein that functions in genetic recombination as well as in transcriptional and translational control. The chain is Integration host factor subunit alpha from Vibrio campbellii (strain ATCC BAA-1116).